The primary structure comprises 331 residues: (+)-aristolochene synthase TS1 (331 aa).

Positions 1 to 22 are disordered; that stretch reads MTRMKNSSSNVTSASGSGSGSG. A compositionally biased stretch (low complexity) spans 7-16; it reads SSSNVTSASG. 4 residues coordinate Mg(2+): D102, N231, S235, and E239. Positions 102–106 match the DDxx(x)D/E motif motif; the sequence is DDLLE. An NDxxSxxxD/E motif motif is present at residues 231–239; it reads NDVYSYEKE. Residues R326 and Y327 each coordinate (2E,6E)-farnesyl diphosphate.

This sequence belongs to the terpene synthase family. Homodimer. The cofactor is Mg(2+).

The catalysed reaction is (2E,6E)-farnesyl diphosphate = (+)-aristolochene + diphosphate. It functions in the pathway sesquiterpene biosynthesis; aristolochene biosynthesis; aristolochene from farnesyl diphosphate: step 1/1. Its function is as follows. Catalyzes the cyclization of trans,trans-farnesyl diphosphate (FPP) to the bicyclic sesquiterpene aristolochene. Aristolochene is the likely parent compound for a number of sesquiterpenoid toxins produced by filamentous fungi. This Penicillium expansum (Blue mold rot fungus) protein is (+)-aristolochene synthase TS1.